The chain runs to 334 residues: MQEVEKLKLLQSEREALKSRIKVKEQEKKAENHTETVCPECGGRQLVHDYERAELVCQSCGLVIDDDFIDRGPEWRAFDHDQRMKRSRVGAPMTFTIHDKGLSTMIDWRNRDSYGRAISSKNRAQLYRLRKWQRRIRVSNATERNLAFALSELDRMASALGLPRNVRETAAVVYRDAVDKNLIRGRSIEGVAAAALYAACRQCSVPRTLDEIAEVSRVSRKEIGRTYRFISRELGLKLLPTSPIDYVPRFCSGLTLKGEVQSRAVEILRQAGERELTSGRGPTGVAAAAIYISSILGGERRTQREVAEVAGVTEVTIRNRYKELAEKLDIEIIL.

A TFIIB-type zinc finger spans residues 34-65 (TETVCPECGGRQLVHDYERAELVCQSCGLVID). Positions 38, 41, 57, and 60 each coordinate Zn(2+). 2 consecutive repeat copies span residues 151 to 234 (SELD…SREL) and 245 to 326 (DYVP…ELAE).

The protein belongs to the TFIIB family.

Stabilizes TBP binding to an archaeal box-A promoter. Also responsible for recruiting RNA polymerase II to the pre-initiation complex (DNA-TBP-TFIIB). This is Transcription initiation factor IIB from Methanoregula boonei (strain DSM 21154 / JCM 14090 / 6A8).